We begin with the raw amino-acid sequence, 994 residues long: Bifunctional glutamine synthetase adenylyltransferase/adenylyl-removing enzyme (994 aa).

The interval 1 to 487 is adenylyl removase; it reads MVVTKLATQR…LHTKLFYQPL (487 aa). Residues 492 to 994 form an adenylyl transferase region; sequence GPTGLEIAHG…KAVVRKVFGS (503 aa).

This sequence belongs to the GlnE family. The cofactor is Mg(2+).

It carries out the reaction [glutamine synthetase]-O(4)-(5'-adenylyl)-L-tyrosine + phosphate = [glutamine synthetase]-L-tyrosine + ADP. The enzyme catalyses [glutamine synthetase]-L-tyrosine + ATP = [glutamine synthetase]-O(4)-(5'-adenylyl)-L-tyrosine + diphosphate. Involved in the regulation of glutamine synthetase GlnA, a key enzyme in the process to assimilate ammonia. When cellular nitrogen levels are high, the C-terminal adenylyl transferase (AT) inactivates GlnA by covalent transfer of an adenylyl group from ATP to specific tyrosine residue of GlnA, thus reducing its activity. Conversely, when nitrogen levels are low, the N-terminal adenylyl removase (AR) activates GlnA by removing the adenylyl group by phosphorolysis, increasing its activity. The regulatory region of GlnE binds the signal transduction protein PII (GlnB) which indicates the nitrogen status of the cell. The protein is Bifunctional glutamine synthetase adenylyltransferase/adenylyl-removing enzyme of Mycobacterium tuberculosis (strain CDC 1551 / Oshkosh).